Consider the following 62-residue polypeptide: Large ribosomal subunit protein bL28 (62 aa).

The interval 1-23 (MARRCFVTGKSAKAGNARSHSMR) is disordered.

This sequence belongs to the bacterial ribosomal protein bL28 family.

The protein is Large ribosomal subunit protein bL28 of Brevibacillus brevis (strain 47 / JCM 6285 / NBRC 100599).